Here is a 232-residue protein sequence, read N- to C-terminus: Orotate phosphoribosyltransferase (232 aa).

5-phospho-alpha-D-ribose 1-diphosphate is bound at residue lysine 28. Position 36-37 (36-37 (FF)) interacts with orotate. 5-phospho-alpha-D-ribose 1-diphosphate-binding positions include 78 to 79 (YK), arginine 108, lysine 109, lysine 112, histidine 114, and 134 to 142 (DDVITAGTA). Residues threonine 138 and arginine 166 each contribute to the orotate site.

The protein belongs to the purine/pyrimidine phosphoribosyltransferase family. PyrE subfamily. In terms of assembly, homodimer.

It catalyses the reaction orotidine 5'-phosphate + diphosphate = orotate + 5-phospho-alpha-D-ribose 1-diphosphate. The protein operates within pyrimidine metabolism; UMP biosynthesis via de novo pathway; UMP from orotate: step 1/2. Catalyzes the transfer of a ribosyl phosphate group from 5-phosphoribose 1-diphosphate to orotate, leading to the formation of orotidine monophosphate (OMP). The protein is Orotate phosphoribosyltransferase (URA5) of Sordaria macrospora.